Consider the following 257-residue polypeptide: Lipid A 4'-phosphatase (257 aa).

6 consecutive transmembrane segments (helical) span residues 21–41 (FGAFLLLFWTWWALLAVFRAF), 85–105 (IFFRLPYVVAIVMAWKLIECY), 119–139 (KLKVGLGALLIGPVLLVNVIL), 174–194 (CSFVSGEAASAGWLFCLLLFV), 201–221 (ALVPPVAAISILTPAMRLSFG), and 225–245 (LSDVTLGWLSSLVVFAALLAL).

This sequence belongs to the lipid A LpxF 4'-phosphatase family.

It localises to the cell inner membrane. It participates in bacterial outer membrane biogenesis; LPS lipid A biosynthesis. Functionally, probably removes the 4'-phosphate moiety from lipid A species. Not seen to act on other membrane components, nor does it dephosphorylate the 1-phosphate group of lipid A and/or lipid A precursors. The chain is Lipid A 4'-phosphatase from Rhizobium etli (strain ATCC 51251 / DSM 11541 / JCM 21823 / NBRC 15573 / CFN 42).